Reading from the N-terminus, the 637-residue chain is Early transcription factor 70 kDa subunit (637 aa).

In terms of domain architecture, Helicase ATP-binding spans 32–185; that stretch reads RTIIDENRSV…GHIIDLMSEE (154 aa). ATP is bound at residue 45–52; the sequence is HIMGSGKT. The DEXH box signature appears at 135–138; it reads DEAH. The Helicase C-terminal domain maps to 327–507; the sequence is KFKYFINRIQ…VLPFDIKKLL (181 aa).

Belongs to the helicase family. VETF subfamily. In terms of assembly, heterodimer of a 70 kDa and a 82 kDa subunit. Part of the early transcription complex composed of ETF, RAP94/OPG109, and the DNA-directed RNA polymerase.

Its subcellular location is the virion. Acts with RNA polymerase to initiate transcription from early gene promoters. Is recruited by the RPO-associated protein of 94 kDa RAP94/OPG109 to form the early transcription complex, which also contains the core RNA polymerase. ETF heterodimer binds to early gene promoters. This chain is Early transcription factor 70 kDa subunit (OPG118), found in Vaccinia virus (strain Ankara) (VACV).